The sequence spans 430 residues: Tol-Pal system protein TolB (430 aa).

The N-terminal stretch at 1–21 (MKQALRVAFGFLMLWAAVLHA) is a signal peptide.

It belongs to the TolB family. The Tol-Pal system is composed of five core proteins: the inner membrane proteins TolA, TolQ and TolR, the periplasmic protein TolB and the outer membrane protein Pal. They form a network linking the inner and outer membranes and the peptidoglycan layer.

It is found in the periplasm. In terms of biological role, part of the Tol-Pal system, which plays a role in outer membrane invagination during cell division and is important for maintaining outer membrane integrity. TolB occupies a key intermediary position in the Tol-Pal system because it communicates directly with both membrane-embedded components, Pal in the outer membrane and TolA in the inner membrane. In Salmonella choleraesuis (strain SC-B67), this protein is Tol-Pal system protein TolB.